We begin with the raw amino-acid sequence, 259 residues long: Deoxyribose-phosphate aldolase (259 aa).

Aspartate 102 acts as the Proton donor/acceptor in catalysis. Catalysis depends on lysine 167, which acts as the Schiff-base intermediate with acetaldehyde. Lysine 201 functions as the Proton donor/acceptor in the catalytic mechanism.

The protein belongs to the DeoC/FbaB aldolase family. DeoC type 2 subfamily.

It is found in the cytoplasm. It carries out the reaction 2-deoxy-D-ribose 5-phosphate = D-glyceraldehyde 3-phosphate + acetaldehyde. It functions in the pathway carbohydrate degradation; 2-deoxy-D-ribose 1-phosphate degradation; D-glyceraldehyde 3-phosphate and acetaldehyde from 2-deoxy-alpha-D-ribose 1-phosphate: step 2/2. Functionally, catalyzes a reversible aldol reaction between acetaldehyde and D-glyceraldehyde 3-phosphate to generate 2-deoxy-D-ribose 5-phosphate. The protein is Deoxyribose-phosphate aldolase of Salmonella typhi.